A 314-amino-acid polypeptide reads, in one-letter code: DNA-directed RNA polymerase subunit alpha (314 aa).

The segment at 1 to 228 (MIEIEKPKIE…EHLNIFVGLT (228 aa)) is alpha N-terminal domain (alpha-NTD). The tract at residues 245 to 314 (KEKVLEMTIE…ELGLSLRKDD (70 aa)) is alpha C-terminal domain (alpha-CTD).

Belongs to the RNA polymerase alpha chain family. In terms of assembly, homodimer. The RNAP catalytic core consists of 2 alpha, 1 beta, 1 beta' and 1 omega subunit. When a sigma factor is associated with the core the holoenzyme is formed, which can initiate transcription.

It catalyses the reaction RNA(n) + a ribonucleoside 5'-triphosphate = RNA(n+1) + diphosphate. In terms of biological role, DNA-dependent RNA polymerase catalyzes the transcription of DNA into RNA using the four ribonucleoside triphosphates as substrates. In Geobacillus kaustophilus (strain HTA426), this protein is DNA-directed RNA polymerase subunit alpha.